A 243-amino-acid chain; its full sequence is UPF0758 protein Ava_0172 (243 aa).

The MPN domain maps to 113 to 235 (PIDSPVAAVA…HQSLREVTTL (123 aa)). Positions 184, 186, and 197 each coordinate Zn(2+). A JAMM motif motif is present at residues 184-197 (HNHPSGNVEPSPED).

This sequence belongs to the UPF0758 family.

The chain is UPF0758 protein Ava_0172 from Trichormus variabilis (strain ATCC 29413 / PCC 7937) (Anabaena variabilis).